Here is a 177-residue protein sequence, read N- to C-terminus: Coatomer subunit zeta-1 (177 aa).

This sequence belongs to the adaptor complexes small subunit family. In terms of assembly, oligomeric complex that consists of at least the alpha, beta, beta', gamma, delta, epsilon and zeta subunits.

Its subcellular location is the cytoplasm. It localises to the golgi apparatus membrane. The protein localises to the cytoplasmic vesicle. The protein resides in the COPI-coated vesicle membrane. Its function is as follows. The coatomer is a cytosolic protein complex that binds to dilysine motifs and reversibly associates with Golgi non-clathrin-coated vesicles, which further mediate biosynthetic protein transport from the ER, via the Golgi up to the trans Golgi network. Coatomer complex is required for budding from Golgi membranes, and is essential for the retrograde Golgi-to-ER transport of dilysine-tagged proteins. The zeta subunit may be involved in regulating the coat assembly and, hence, the rate of biosynthetic protein transport due to its association-dissociation properties with the coatomer complex. This is Coatomer subunit zeta-1 (COPZ1) from Oryza sativa subsp. japonica (Rice).